The following is a 680-amino-acid chain: Tumor protein 63 (680 aa).

A transcription activation region spans residues 1–107 (MNFETSRCAT…MQDSDLSDPM (107 aa)). The segment covering 123–157 (QIQNGSSSTSPYNTDHAQNSVTAPSPYAQPSSTFD) has biased composition (polar residues). Positions 123–171 (QIQNGSSSTSPYNTDHAQNSVTAPSPYAQPSSTFDALSPSPAIPSNTDY) are disordered. Residues 170–362 (DYPGPHSFDV…KADEDSIRKQ (193 aa)) mediate DNA binding. Zn(2+) contacts are provided by Cys244, His247, Cys308, and Cys312. Residues 351-360 (DRKADEDSIR) are compositionally biased toward basic and acidic residues. Disordered regions lie at residues 351–393 (DRKA…IKKR) and 435–472 (YRQQQQQQHQHLLQKQTSIQSPSSYGNSSPPLNKMNSM). An interaction with HIPK2 region spans residues 352–388 (RKADEDSIRKQQVSDSTKNGDGTKRPFRQNTHGIQMT). Polar residues-rich tracts occupy residues 361 to 371 (KQQVSDSTKNG) and 379 to 389 (RQNTHGIQMTS). The tract at residues 394 to 443 (RSPDDELLYLPVRGRETYEMLLKIKESLELMQYLPQHTIETYRQQQQQQH) is oligomerization. A compositionally biased stretch (low complexity) spans 437–450 (QQQQQQHQHLLQKQ). Residues 451–472 (TSIQSPSSYGNSSPPLNKMNSM) are compositionally biased toward polar residues. The region spanning 541 to 607 (PPYPTDCSIV…WKGILDHRQL (67 aa)) is the SAM domain. A transactivation inhibition region spans residues 610–680 (FSSPSHLLRT…KQQRIKEEGE (71 aa)). Lys676 participates in a covalent cross-link: Glycyl lysine isopeptide (Lys-Gly) (interchain with G-Cter in SUMO).

The protein belongs to the p53 family. In terms of assembly, binds DNA as a homotetramer. Isoform composition of the tetramer may determine transactivation activity. Isoforms Alpha and Gamma interact with HIPK2. Interacts with SSRP1, leading to stimulate coactivator activity. Isoform 1 and isoform 2 interact with WWP1. Interacts with PDS5A. Isoform 5 (via activation domain) interacts with NOC2L. Zn(2+) serves as cofactor. May be sumoylated. Post-translationally, ubiquitinated. Polyubiquitination involves WWP1 and leads to proteasomal degradation of this protein. As to expression, widely expressed, notably in heart, kidney, placenta, prostate, skeletal muscle, testis and thymus, although the precise isoform varies according to tissue type. Progenitor cell layers of skin, breast, eye and prostate express high levels of DeltaN-type isoforms. Isoform 10 is predominantly expressed in skin squamous cell carcinomas, but not in normal skin tissues.

The protein resides in the nucleus. In terms of biological role, acts as a sequence specific DNA binding transcriptional activator or repressor. The isoforms contain a varying set of transactivation and auto-regulating transactivation inhibiting domains thus showing an isoform specific activity. Isoform 2 activates RIPK4 transcription. May be required in conjunction with TP73/p73 for initiation of p53/TP53 dependent apoptosis in response to genotoxic insults and the presence of activated oncogenes. Involved in Notch signaling by probably inducing JAG1 and JAG2. Plays a role in the regulation of epithelial morphogenesis. The ratio of DeltaN-type and TA*-type isoforms may govern the maintenance of epithelial stem cell compartments and regulate the initiation of epithelial stratification from the undifferentiated embryonal ectoderm. Required for limb formation from the apical ectodermal ridge. Activates transcription of the p21 promoter. The sequence is that of Tumor protein 63 (TP63) from Homo sapiens (Human).